A 290-amino-acid chain; its full sequence is Glycine--tRNA ligase alpha subunit (290 aa).

This sequence belongs to the class-II aminoacyl-tRNA synthetase family. As to quaternary structure, tetramer of two alpha and two beta subunits.

Its subcellular location is the cytoplasm. It carries out the reaction tRNA(Gly) + glycine + ATP = glycyl-tRNA(Gly) + AMP + diphosphate. The sequence is that of Glycine--tRNA ligase alpha subunit from Fusobacterium nucleatum subsp. nucleatum (strain ATCC 25586 / DSM 15643 / BCRC 10681 / CIP 101130 / JCM 8532 / KCTC 2640 / LMG 13131 / VPI 4355).